The sequence spans 172 residues: MSDAGEAPAVAATDKPHRRTLRAAQDDYTVDGLRLKPAYVEYYRQLQEIVELAVITLSKQLDIREVQEVYSLARQLYEILRGQFVDEPFKLWLETNASRLAADAEFKKSMHKILQDQLQTLTAKTNTFKNAVLNVLNNELSTDANLYDTSAGYIKPNCIVTTFTCCDLTFEP.

This is an uncharacterized protein from Orgyia pseudotsugata (Douglas-fir tussock moth).